The following is a 153-amino-acid chain: Protein-export protein SecB (153 aa).

The protein belongs to the SecB family. In terms of assembly, homotetramer, a dimer of dimers. One homotetramer interacts with 1 SecA dimer.

The protein resides in the cytoplasm. One of the proteins required for the normal export of preproteins out of the cell cytoplasm. It is a molecular chaperone that binds to a subset of precursor proteins, maintaining them in a translocation-competent state. It also specifically binds to its receptor SecA. This Erwinia tasmaniensis (strain DSM 17950 / CFBP 7177 / CIP 109463 / NCPPB 4357 / Et1/99) protein is Protein-export protein SecB.